The sequence spans 181 residues: Translationally-controlled tumor protein homolog (181 aa).

One can recognise a TCTP domain in the interval 1 to 181 (MLIYKDIFTD…VKEAIIEEKC (181 aa)).

It belongs to the TCTP family.

The protein localises to the cytoplasm. Involved in calcium binding and microtubule stabilization. This chain is Translationally-controlled tumor protein homolog (tct-1), found in Caenorhabditis elegans.